The following is a 618-amino-acid chain: Poly(A)-specific ribonuclease PARN-like (618 aa).

Serine 54, glutamine 56, aspartate 332, and asparagine 418 together coordinate a divalent metal cation. The segment at 588 to 607 (ALESSDTDPDSDTKPSEIDW) is disordered.

It belongs to the CAF1 family. The cofactor is a divalent metal cation.

It localises to the nucleus. The protein localises to the cytoplasm. It carries out the reaction Exonucleolytic cleavage of poly(A) to 5'-AMP.. Functionally, 3'-exoribonuclease that has a preference for poly(A) tails of mRNAs, thereby efficiently degrading poly(A) tails. Exonucleolytic degradation of the poly(A) tail is often the first step in the decay of eukaryotic mRNAs. The sequence is that of Poly(A)-specific ribonuclease PARN-like from Arabidopsis thaliana (Mouse-ear cress).